A 341-amino-acid polypeptide reads, in one-letter code: Glyceraldehyde-3-phosphate dehydrogenase (341 aa).

Residues T11–I12 and G110 contribute to the NAD(+) site. S139–N141 is a D-glyceraldehyde 3-phosphate binding site. The active-site Nucleophile is C140. R168 provides a ligand contact to NAD(+). H194–G195 contributes to the D-glyceraldehyde 3-phosphate binding site. Q302 is an NAD(+) binding site.

It belongs to the glyceraldehyde-3-phosphate dehydrogenase family. In terms of assembly, homotetramer.

It localises to the cytoplasm. The enzyme catalyses D-glyceraldehyde 3-phosphate + phosphate + NADP(+) = (2R)-3-phospho-glyceroyl phosphate + NADPH + H(+). The catalysed reaction is D-glyceraldehyde 3-phosphate + phosphate + NAD(+) = (2R)-3-phospho-glyceroyl phosphate + NADH + H(+). The protein operates within carbohydrate degradation; glycolysis; pyruvate from D-glyceraldehyde 3-phosphate: step 1/5. In Methanoculleus marisnigri (strain ATCC 35101 / DSM 1498 / JR1), this protein is Glyceraldehyde-3-phosphate dehydrogenase.